Here is a 131-residue protein sequence, read N- to C-terminus: 14.7 kDa heat shock protein (131 aa).

Residues 1 to 11 show a composition bias toward polar residues; sequence MSRNMEVNAGS. The segment at 1–20 is disordered; the sequence is MSRNMEVNAGSSGEIPSPIR. A sHSP domain is found at 22 to 131; sequence RFQKSGSQAV…INVKERILHY (110 aa).

This sequence belongs to the small heat shock protein (HSP20) family. As to quaternary structure, may form oligomeric structures.

It is found in the cytoplasm. This is 14.7 kDa heat shock protein (HSP14.7) from Arabidopsis thaliana (Mouse-ear cress).